A 94-amino-acid polypeptide reads, in one-letter code: MLKPLGDRVIIEVTEAAEQTVGGIVLANNAKDKPVTGKVVAVGSGYVLNDGSKQDLTVKSGDQVLFDKYAGQEVSFEGADYLALHEKDIVAIVE.

Belongs to the GroES chaperonin family. Heptamer of 7 subunits arranged in a ring. Interacts with the chaperonin GroEL.

It localises to the cytoplasm. Together with the chaperonin GroEL, plays an essential role in assisting protein folding. The GroEL-GroES system forms a nano-cage that allows encapsulation of the non-native substrate proteins and provides a physical environment optimized to promote and accelerate protein folding. GroES binds to the apical surface of the GroEL ring, thereby capping the opening of the GroEL channel. The protein is Co-chaperonin GroES of Leuconostoc citreum (strain KM20).